Reading from the N-terminus, the 1098-residue chain is NACHT, LRR and PYD domains-containing protein 5 (1098 aa).

The 97-residue stretch at 1–97 folds into the Pyrin domain; that stretch reads MREAKIAPLS…SEMARDEMKK (97 aa). The disordered stretch occupies residues 104–131; that stretch reads SEDSAPTKTDQGPSMKEVPGPREDPQDS. Residues 122–131 show a composition bias toward basic and acidic residues; it reads PGPREDPQDS. The 324-residue stretch at 180–503 folds into the NACHT domain; it reads LTVVLHGPPG…ALFYVLRGVE (324 aa). 186–193 serves as a coordination point for ATP; that stretch reads GPPGVGKS. LRR repeat units follow at residues 851–871, 880–900, 908–928, 937–958, 965–985, 993–1013, and 1021–1041; these read GLTHLSLSGDELGSKGMSLLC, GLQKLALNACSLDVAGCGFLA, HLTHLSLSMNPLEDPGMNLLC, PLRDLDLVNCRLTASCCKSLSN, RLRSLDLAANALGDEGIAALC, TLTRLGLEACGLTSEGCKALS, and HLASLNLMRNDLGPRGMTTLC.

This sequence belongs to the NLRP family. Component of the subcortical maternal complex (SCMC), at least composed of NLRP5, KHDC3, OOEP, and TLE6. Within the complex, interacts with OOEP, KHDC3 and TLE6. The SCMC may facilitate translocation of its components between the nuclear and cytoplasmic compartments. As part of the SCMC interacts with the SCMC-associated protein ZBED3. As part of the SCMC interacts with the SCMC-associated protein CFL1/Cofilin-1. Interacts with PRKCE. Interacts with TUBB3 at cytoskeleton microtubules. Phosphorylated by PRKCE. As to expression, oocyte-specific.

Its subcellular location is the cytoplasm. The protein localises to the cytoplasmic vesicle. The protein resides in the secretory vesicle. It localises to the cortical granule. It is found in the mitochondrion. Its subcellular location is the nucleus. The protein localises to the nucleolus. The protein resides in the golgi apparatus. In terms of biological role, component of the subcortical maternal complex (SCMC), a multiprotein complex that plays a key role in early embryonic development. The SCMC complex is a structural constituent of cytoplasmic lattices, which consist in fibrous structures found in the cytoplasm of oocytes and preimplantation embryos. They are required to store maternal proteins critical for embryonic development, such as proteins that control epigenetic reprogramming of the preimplantation embryo, and prevent their degradation or activation. Required for the localization of cortical granules to the cortex of oocytes, via association with the cortical actin scaffold. Required for cortical actin clearance prior to oocyte exocytosis and prevention of polyspermy. Involved in regulating post-fertilization Ca(2+) release and endoplasmic reticulum storage (ER) storage via regulation of cellular localization. May be involved in the localization of mitochondria to the cytoplasm and perinuclear region in oocytes and early stage embryos, independent of its role in CPL formation. This chain is NACHT, LRR and PYD domains-containing protein 5 (NLRP5), found in Bos taurus (Bovine).